The sequence spans 593 residues: Cyclin-dependent kinase-like 3 (593 aa).

The region spanning 4–286 is the Protein kinase domain; it reads YETLGKVGEG…STDLLHHDYF (283 aa). Residues 10-18 and Lys-33 each bind ATP; that span reads VGEGSYGTV. A [NKR]KIAxRE motif is present at residues 45 to 51; that stretch reads KIATREI. The active-site Proton acceptor is the Asp-125. Thr-158 bears the Phosphothreonine mark. Phosphotyrosine is present on Tyr-160. The span at 368-403 shows a compositional bias: basic and acidic residues; sequence GKGDVPDLKKTESEGEHRQQGTAEDTHPTSLDRKPS. The interval 368–512 is disordered; sequence GKGDVPDLKK…NDQIASGNKR (145 aa). The span at 436–452 shows a compositional bias: low complexity; sequence NLTSSNLLAANPSSNLS. Composition is skewed to polar residues over residues 468–491 and 499–508; these read SSQT…QVQT and RTGQNDQIAS.

The protein belongs to the protein kinase superfamily. CMGC Ser/Thr protein kinase family. CDC2/CDKX subfamily. As to expression, highly expressed in brain, and to a lower extent in heart and testis.

Its subcellular location is the nucleus. The protein localises to the cytoplasm. The enzyme catalyses L-seryl-[protein] + ATP = O-phospho-L-seryl-[protein] + ADP + H(+). It carries out the reaction L-threonyl-[protein] + ATP = O-phospho-L-threonyl-[protein] + ADP + H(+). This Rattus norvegicus (Rat) protein is Cyclin-dependent kinase-like 3.